The following is a 556-amino-acid chain: 2-succinyl-5-enolpyruvyl-6-hydroxy-3-cyclohexene-1-carboxylate synthase (556 aa).

The protein belongs to the TPP enzyme family. MenD subfamily. In terms of assembly, homodimer. It depends on Mg(2+) as a cofactor. Mn(2+) serves as cofactor. Thiamine diphosphate is required as a cofactor.

The catalysed reaction is isochorismate + 2-oxoglutarate + H(+) = 5-enolpyruvoyl-6-hydroxy-2-succinyl-cyclohex-3-ene-1-carboxylate + CO2. It participates in quinol/quinone metabolism; 1,4-dihydroxy-2-naphthoate biosynthesis; 1,4-dihydroxy-2-naphthoate from chorismate: step 2/7. The protein operates within quinol/quinone metabolism; menaquinone biosynthesis. In terms of biological role, catalyzes the thiamine diphosphate-dependent decarboxylation of 2-oxoglutarate and the subsequent addition of the resulting succinic semialdehyde-thiamine pyrophosphate anion to isochorismate to yield 2-succinyl-5-enolpyruvyl-6-hydroxy-3-cyclohexene-1-carboxylate (SEPHCHC). The polypeptide is 2-succinyl-5-enolpyruvyl-6-hydroxy-3-cyclohexene-1-carboxylate synthase (Escherichia coli O7:K1 (strain IAI39 / ExPEC)).